The following is a 516-amino-acid chain: Poly(U)-binding-splicing factor PUF60-B (516 aa).

RRM domains are found at residues 86–164 (CRVY…RPGS) and 183–261 (NRIY…KAVT). Residues 356–398 (TAPASMGTPTSAVQLHTEVKREEDSRRTAEDHSAPVGNGQDSE) are disordered. The span at 372 to 388 (TEVKREEDSRRTAEDHS) shows a compositional bias: basic and acidic residues. The RRM 3; atypical domain occupies 419 to 506 (TVMVLRNMVG…RKVVAELYDQ (88 aa)).

This sequence belongs to the RRM half pint family.

The protein resides in the nucleus. Functionally, DNA- and RNA-binding protein, involved in transcription repression and pre-mRNA splicing. The protein is Poly(U)-binding-splicing factor PUF60-B (puf60b) of Danio rerio (Zebrafish).